The chain runs to 507 residues: Probable Xaa-Pro aminopeptidase HCAG_02413 (507 aa).

Mn(2+)-binding residues include aspartate 283, aspartate 294, glutamate 431, and glutamate 469.

It belongs to the peptidase M24B family. Mn(2+) is required as a cofactor.

It catalyses the reaction Release of any N-terminal amino acid, including proline, that is linked to proline, even from a dipeptide or tripeptide.. In terms of biological role, catalyzes the removal of a penultimate prolyl residue from the N-termini of peptides. This is Probable Xaa-Pro aminopeptidase HCAG_02413 from Ajellomyces capsulatus (strain NAm1 / WU24) (Darling's disease fungus).